We begin with the raw amino-acid sequence, 528 residues long: Probable protein phosphatase 2C 51 (528 aa).

Residues 8–28 (SLLNLGLLIIFFVFFFLVINC) traverse the membrane as a helical segment. The 375-residue stretch at 71-445 (RCHTAAIQGR…DNMAAVVVPL (375 aa)) folds into the PPM-type phosphatase domain. Mn(2+) is bound by residues aspartate 117, glycine 118, aspartate 385, and aspartate 436.

This sequence belongs to the PP2C family. Requires Mg(2+) as cofactor. It depends on Mn(2+) as a cofactor.

It localises to the membrane. The catalysed reaction is O-phospho-L-seryl-[protein] + H2O = L-seryl-[protein] + phosphate. It carries out the reaction O-phospho-L-threonyl-[protein] + H2O = L-threonyl-[protein] + phosphate. This chain is Probable protein phosphatase 2C 51, found in Arabidopsis thaliana (Mouse-ear cress).